A 410-amino-acid chain; its full sequence is uncharacterized protein (410 aa).

A run of 12 helical transmembrane segments spans residues 27–47 (ILALFSGGFATFSILYCVQSI), 63–83 (SLALSAATITMSLGMLFTGPL), 97–117 (LFIAAMLTMICSMMTSWISIV), 118–138 (LLRALTGLALSGVVAVAMTYI), 145–165 (NSLSFCMGLYISGNTIGGFLG), 180–200 (ISLMVIGLFSFISSCFFLYFL), 228–248 (VLFFLFIIGFILMGSFVTIFN), 254–274 (LMLEPFFLCQSSIGLLSTIYL), 293–313 (NNILIVSLMLMIIGLFITQYN), 316–332 (FIIILGLIIFSGGFFAS), 355–375 (YLFFYYLGSSVFGTFGGFFWF), and 378–398 (QWLGISVFIITMLFFGVFLSF).

Belongs to the major facilitator superfamily.

The protein localises to the cell membrane. This is an uncharacterized protein from Buchnera aphidicola subsp. Acyrthosiphon pisum (strain APS) (Acyrthosiphon pisum symbiotic bacterium).